Consider the following 403-residue polypeptide: cAMP-dependent protein kinase regulatory subunit (403 aa).

The interval 1-155 (MADYTIPSEL…RIQASIGNNF (155 aa)) is dimerization and phosphorylation. The disordered stretch occupies residues 79 to 125 (YAYSTDDGFGTEDDDDDDDDEDDEAAIPPPVVNRGRRTSVSAESMAP). The span at 87–103 (FGTEDDDDDDDDEDDEA) shows a compositional bias: acidic residues. A Phosphoserine modification is found at serine 117. 3',5'-cyclic AMP contacts are provided by residues 156–278 (LFRN…EEVP), glutamate 226, arginine 235, 279–403 (LLSS…PGEH), glutamate 349, and arginine 358.

Belongs to the cAMP-dependent kinase regulatory chain family. As to quaternary structure, tetramer, composed of 2 regulatory (R) and 2 catalytic (C) subunits. In the presence of cAMP it dissociates into 2 active monomeric C subunits and an R dimer that binds four cAMP molecules.

The chain is cAMP-dependent protein kinase regulatory subunit (PKAR) from Blastocladiella emersonii (Aquatic fungus).